Consider the following 172-residue polypeptide: MNYFNVGKIVNTQGLQGEMRVLSVTDFAEERFKKGAELVLFDEKDQFVQTVTIASHRKQKNFDIIKFKDMYHINTIEKYKGYSLKVAEEDLNDLDDGEFYYHEIIGLEVYEGDSLVGTIKEILQPGANDVWVVKRKGKRDLLLPYIPPVVLNVDIPSKRVDVEILEGLDDED.

The PRC barrel domain occupies 96–168 (DGEFYYHEII…RVDVEILEGL (73 aa)).

This sequence belongs to the RimM family. As to quaternary structure, binds ribosomal protein uS19.

The protein localises to the cytoplasm. Functionally, an accessory protein needed during the final step in the assembly of 30S ribosomal subunit, possibly for assembly of the head region. Essential for efficient processing of 16S rRNA. May be needed both before and after RbfA during the maturation of 16S rRNA. It has affinity for free ribosomal 30S subunits but not for 70S ribosomes. The protein is Ribosome maturation factor RimM of Streptococcus pneumoniae serotype 4 (strain ATCC BAA-334 / TIGR4).